Reading from the N-terminus, the 440-residue chain is L-seryl-tRNA(Sec) selenium transferase (440 aa).

N6-(pyridoxal phosphate)lysine is present on K282.

Belongs to the SelA family. The cofactor is pyridoxal 5'-phosphate.

Its subcellular location is the cytoplasm. The catalysed reaction is L-seryl-tRNA(Sec) + selenophosphate + H(+) = L-selenocysteinyl-tRNA(Sec) + phosphate. It participates in aminoacyl-tRNA biosynthesis; selenocysteinyl-tRNA(Sec) biosynthesis; selenocysteinyl-tRNA(Sec) from L-seryl-tRNA(Sec) (bacterial route): step 1/1. Its function is as follows. Converts seryl-tRNA(Sec) to selenocysteinyl-tRNA(Sec) required for selenoprotein biosynthesis. This Campylobacter jejuni subsp. jejuni serotype O:2 (strain ATCC 700819 / NCTC 11168) protein is L-seryl-tRNA(Sec) selenium transferase.